The primary structure comprises 600 residues: E3 ubiquitin-protein ligase RLIM (600 aa).

The residue at position 1 (Met-1) is an N-acetylmethionine. Residues 1–11 (MENSDSNDKGS) are compositionally biased toward basic and acidic residues. 3 disordered regions span residues 1–24 (MENSDSNDKGSDQSAAQRRSQMDR), 49–355 (NNLL…ERGG), and 417–497 (SDSE…VTFD). Composition is skewed to polar residues over residues 103–131 (SVRQTGNTTRSGQRGNQSWRAVSRTNPNS) and 140–152 (INVNRNNGSQTSE). Ser-163 is subject to Phosphoserine. Residues 166 to 175 (NMESSSQRQM) show a composition bias toward polar residues. Residues 176–187 (ENSASESASARP) show a composition bias toward low complexity. Phosphoserine occurs at positions 194, 227, and 229. A compositionally biased stretch (basic and acidic residues) spans 213 to 228 (RSPEHRRTRARAERSR). Residues 244 to 255 (LEQSSENEPEGS) are compositionally biased toward polar residues. Ser-269 carries the post-translational modification Phosphoserine. Residues 288–306 (SQGTSSSDTGSNSESSGSG) are compositionally biased toward low complexity. A compositionally biased stretch (basic and acidic residues) spans 322–332 (RPGEYRQRDSI). Residues 333–349 (ASRTRSRSQAPNNTVTY) show a composition bias toward polar residues. Residues 448 to 475 (SGSSSSSSPSPSSSGESSESSSEMFEGS) show a composition bias toward low complexity. Residues 546 to 587 (CSVCITEYTEGNKLRKLPCSHEYHVHCIDRWLSENSTCPICR) form an RING-type zinc finger. The PDZ-binding motif lies at 597 to 600 (ESVV).

It belongs to the RNF12 family. As to quaternary structure, interacts (via N-terminus) with TERF1. Interacts (via C-terminus) with ESR1. Interacts with LIM/homeobox factors such as LHX3. Interacts with LDB1, LDB2 and SIN3A. Interacts with LIMK1.

It is found in the nucleus. The catalysed reaction is S-ubiquitinyl-[E2 ubiquitin-conjugating enzyme]-L-cysteine + [acceptor protein]-L-lysine = [E2 ubiquitin-conjugating enzyme]-L-cysteine + N(6)-ubiquitinyl-[acceptor protein]-L-lysine.. It participates in protein modification; protein ubiquitination. Its function is as follows. E3 ubiquitin-protein ligase that acts as a negative coregulator for LIM homeodomain transcription factors by mediating the ubiquitination and subsequent degradation of LIM cofactors LDB1 and LDB2 and by mediating the recruitment the SIN3a/histone deacetylase corepressor complex. Ubiquitination and degradation of LIM cofactors LDB1 and LDB2 allows DNA-bound LIM homeodomain transcription factors to interact with other protein partners such as RLIM. Plays a role in telomere length-mediated growth suppression by mediating the ubiquitination and degradation of TERF1. By targeting ZFP42 for degradation, acts as an activator of random inactivation of X chromosome in the embryo, a stochastic process in which one X chromosome is inactivated to minimize sex-related dosage differences of X-encoded genes in somatic cells of female placental mammals. The polypeptide is E3 ubiquitin-protein ligase RLIM (Rlim) (Mus musculus (Mouse)).